We begin with the raw amino-acid sequence, 345 residues long: Protein RecA (345 aa).

80–87 provides a ligand contact to ATP; the sequence is GPESSGKT.

This sequence belongs to the RecA family.

It localises to the cytoplasm. Its function is as follows. Can catalyze the hydrolysis of ATP in the presence of single-stranded DNA, the ATP-dependent uptake of single-stranded DNA by duplex DNA, and the ATP-dependent hybridization of homologous single-stranded DNAs. It interacts with LexA causing its activation and leading to its autocatalytic cleavage. In Mycoplasma mycoides subsp. mycoides SC (strain CCUG 32753 / NCTC 10114 / PG1), this protein is Protein RecA.